Here is a 92-residue protein sequence, read N- to C-terminus: Large ribosomal subunit protein bL31 (92 aa).

The protein belongs to the bacterial ribosomal protein bL31 family. Type A subfamily. In terms of assembly, part of the 50S ribosomal subunit.

Functionally, binds the 23S rRNA. The chain is Large ribosomal subunit protein bL31 from Mesoplasma florum (strain ATCC 33453 / NBRC 100688 / NCTC 11704 / L1) (Acholeplasma florum).